A 490-amino-acid chain; its full sequence is Cytochrome P450 2C12, female-specific (490 aa).

Cys-435 provides a ligand contact to heme.

The protein belongs to the cytochrome P450 family. The cofactor is heme.

It is found in the endoplasmic reticulum membrane. It localises to the microsome membrane. It carries out the reaction an organic molecule + reduced [NADPH--hemoprotein reductase] + O2 = an alcohol + oxidized [NADPH--hemoprotein reductase] + H2O + H(+). Functionally, this P450 is active in 15-beta-hydroxylation of steroid sulfates. The chain is Cytochrome P450 2C12, female-specific (Cyp2c12) from Rattus norvegicus (Rat).